Here is a 131-residue protein sequence, read N- to C-terminus: D-ribose pyranase (131 aa).

H20 functions as the Proton donor in the catalytic mechanism. Substrate-binding positions include D28, H98, and 120 to 122 (YAN).

This sequence belongs to the RbsD / FucU family. RbsD subfamily. In terms of assembly, homodecamer.

The protein resides in the cytoplasm. It carries out the reaction beta-D-ribopyranose = beta-D-ribofuranose. Its pathway is carbohydrate metabolism; D-ribose degradation; D-ribose 5-phosphate from beta-D-ribopyranose: step 1/2. Its function is as follows. Catalyzes the interconversion of beta-pyran and beta-furan forms of D-ribose. This chain is D-ribose pyranase, found in Bacillus cereus (strain G9842).